A 235-amino-acid chain; its full sequence is Myb family transcription factor PHL12 (235 aa).

The span at 1–12 (MMQSREEIRDDS) shows a compositional bias: basic and acidic residues. A disordered region spans residues 1–20 (MMQSREEIRDDSSSGLVLTT). The HTH myb-type domain occupies 20–80 (TDPKPRLRWT…HLQKFRLGKQ (61 aa)). Positions 51-76 (PKTIMRVMGVKGLTLYHLKSHLQKFR) form a DNA-binding region, H-T-H motif. Residues 119–139 (RNMNEMQMEVQRRIEEEVVIE) form a coiled coil region.

It belongs to the MYB-CC family. Expressed in phloem and/or cambium.

It localises to the nucleus. This Arabidopsis thaliana (Mouse-ear cress) protein is Myb family transcription factor PHL12.